The primary structure comprises 209 residues: Thiamine-phosphate synthase (209 aa).

Residues 37–41 and Asn-69 contribute to the 4-amino-2-methyl-5-(diphosphooxymethyl)pyrimidine site; that span reads QYRDK. The Mg(2+) site is built by Asp-70 and Asp-89. Ser-108 contacts 4-amino-2-methyl-5-(diphosphooxymethyl)pyrimidine. 135-137 serves as a coordination point for 2-[(2R,5Z)-2-carboxy-4-methylthiazol-5(2H)-ylidene]ethyl phosphate; it reads SPT. A 4-amino-2-methyl-5-(diphosphooxymethyl)pyrimidine-binding site is contributed by Lys-138. Residues Gly-165 and 185-186 contribute to the 2-[(2R,5Z)-2-carboxy-4-methylthiazol-5(2H)-ylidene]ethyl phosphate site; that span reads VS.

Belongs to the thiamine-phosphate synthase family. Mg(2+) serves as cofactor.

The enzyme catalyses 2-[(2R,5Z)-2-carboxy-4-methylthiazol-5(2H)-ylidene]ethyl phosphate + 4-amino-2-methyl-5-(diphosphooxymethyl)pyrimidine + 2 H(+) = thiamine phosphate + CO2 + diphosphate. It catalyses the reaction 2-(2-carboxy-4-methylthiazol-5-yl)ethyl phosphate + 4-amino-2-methyl-5-(diphosphooxymethyl)pyrimidine + 2 H(+) = thiamine phosphate + CO2 + diphosphate. It carries out the reaction 4-methyl-5-(2-phosphooxyethyl)-thiazole + 4-amino-2-methyl-5-(diphosphooxymethyl)pyrimidine + H(+) = thiamine phosphate + diphosphate. Its pathway is cofactor biosynthesis; thiamine diphosphate biosynthesis; thiamine phosphate from 4-amino-2-methyl-5-diphosphomethylpyrimidine and 4-methyl-5-(2-phosphoethyl)-thiazole: step 1/1. In terms of biological role, condenses 4-methyl-5-(beta-hydroxyethyl)thiazole monophosphate (THZ-P) and 2-methyl-4-amino-5-hydroxymethyl pyrimidine pyrophosphate (HMP-PP) to form thiamine monophosphate (TMP). The chain is Thiamine-phosphate synthase from Halorhodospira halophila (strain DSM 244 / SL1) (Ectothiorhodospira halophila (strain DSM 244 / SL1)).